Reading from the N-terminus, the 407-residue chain is Indoleamine 2,3-dioxygenase 1 (407 aa).

H350 lines the heme b pocket. The segment at 362–388 (SKQKPMGGHKSEEPSNTENRGTGGTDV) is disordered.

It belongs to the indoleamine 2,3-dioxygenase family. As to quaternary structure, monomer. It depends on heme b as a cofactor.

The protein resides in the cytoplasm. It localises to the cytosol. The catalysed reaction is D-tryptophan + O2 = N-formyl-D-kynurenine. It catalyses the reaction L-tryptophan + O2 = N-formyl-L-kynurenine. Activity is inhibited by and MTH-trp (methylthiohydantoin-DL-tryptophan), modestly inhibited by L-1MT (1-methyl-L-tryptophan) but not D-1MT (1-methyl-D-tryptophan). In terms of biological role, catalyzes the first and rate limiting step of the catabolism of the essential amino acid tryptophan along the kynurenine pathway. Involved in the peripheral immune tolerance, contributing to maintain homeostasis by preventing autoimmunity or immunopathology that would result from uncontrolled and overreacting immune responses. Tryptophan shortage inhibits T lymphocytes division and accumulation of tryptophan catabolites induces T-cell apoptosis and differentiation of regulatory T-cells. Acts as a suppressor of anti-tumor immunity. Limits the growth of intracellular pathogens by depriving tryptophan. Protects the fetus from maternal immune rejection. This chain is Indoleamine 2,3-dioxygenase 1, found in Rattus norvegicus (Rat).